We begin with the raw amino-acid sequence, 994 residues long: MERGGFGGAGRHDEEAPAMRPAPQQRYRTVESHDRAVVQMAPMEFGSSADASASAGPRYIKPGTNLRTDARMHMASSNGRSSNGSQGDSKLELFGFDSLVNILGLKRMVGEQAQASASTRDGENAGIAIGHPKETETKLDTMMGVFVPCLQNILGIIYYIRFTWIVGMGGVWQSLVLVAFCGSCTFLTTISLSAIATNGAMKGGGPYYLIGRALGPEVGVSIGLCFFLGNAVAGAMYVLGAVETFLDAVPSAEFFQESVTVVTNTFVNGTAAGNATTISTPNLHDLQVYGIIVTILLCFIVFGGVKIINKVAPAFLIPVLFSILCIYIGVFIAPRPNASKWITGLSITTLKDNWSSDYQRTNNAGVPDPNGSIYWDFNALLGLYFPAVTGIMAGSNRSASLKDTQRSIPIGTLHATISTTMMYLLSVFLFGALSTREGLLTDRLLCAAVAWPSPAVVYAGIILSTLGAALQSLTGAPRLLAAIANDDILPVLNYFKAYEGSEPHVATLFTSFICISCVIIGNLDVITPTITMFFLLCYAGVNLSCFLLDLLDAPSWRPRWKLHHWSLSLIGALLCIVIMFMISWTFTVVSLALASLIYYYVSLKGKAGDWGDGFKSAYFQLALRSLRSMGANQVHPKNWYPIPLIFCRPWGKLPEDVPCHPKLADFANCMKKKGRGMSIFVSIIDGDYHESAEDAKTACRQLSAYIDYRRCEGVAEIIVAPSTSIGFRSIVQTMGLGNLKPNIVVMRYPEIWRRENLTQIPSTFVSIINDCITANKAVVIVKGLDEWPNEYQRQYGTIDLYWIVRDGGLMLLLSQLLLTKESFESCKIQVFCIAEEDTEAEELKADVKKFLYDLRMQADVIVVTVKSWEADPDRSGGSKKDDPEVYRSAQSRIRTYISQLKEAAERERRPLMEGGKQVVVDEQKVEKFLYTMLKLNATILRHSRMAVVVLVSLPPPPLNHLAYCYMEYMDLLVENIPRILIVRGYRRDVVTLFT.

A disordered region spans residues 1-28 (MERGGFGGAGRHDEEAPAMRPAPQQRYR). Over 1–139 (MERGGFGGAG…GHPKETETKL (139 aa)) the chain is Cytoplasmic. Residues 140-160 (DTMMGVFVPCLQNILGIIYYI) form a helical membrane-spanning segment. Over 161–174 (RFTWIVGMGGVWQS) the chain is Extracellular. The chain crosses the membrane as a helical span at residues 175-195 (LVLVAFCGSCTFLTTISLSAI). At 196–221 (ATNGAMKGGGPYYLIGRALGPEVGVS) the chain is on the cytoplasmic side. The helical transmembrane segment at 222 to 242 (IGLCFFLGNAVAGAMYVLGAV) threads the bilayer. Residues 243-287 (ETFLDAVPSAEFFQESVTVVTNTFVNGTAAGNATTISTPNLHDLQ) lie on the Extracellular side of the membrane. Residues N268 and N274 are each glycosylated (N-linked (GlcNAc...) asparagine). The chain crosses the membrane as a helical span at residues 288-308 (VYGIIVTILLCFIVFGGVKII). Over 309 to 311 (NKV) the chain is Cytoplasmic. A helical membrane pass occupies residues 312–332 (APAFLIPVLFSILCIYIGVFI). At 333–372 (APRPNASKWITGLSITTLKDNWSSDYQRTNNAGVPDPNGS) the chain is on the extracellular side. 3 N-linked (GlcNAc...) asparagine glycosylation sites follow: N337, N353, and N370. A helical membrane pass occupies residues 373–393 (IYWDFNALLGLYFPAVTGIMA). Residues 394–412 (GSNRSASLKDTQRSIPIGT) are Cytoplasmic-facing. A helical membrane pass occupies residues 413–433 (LHATISTTMMYLLSVFLFGAL). The Extracellular portion of the chain corresponds to 434-448 (STREGLLTDRLLCAA). Residues 449–469 (VAWPSPAVVYAGIILSTLGAA) traverse the membrane as a helical segment. Topologically, residues 470-505 (LQSLTGAPRLLAAIANDDILPVLNYFKAYEGSEPHV) are cytoplasmic. The chain crosses the membrane as a helical span at residues 506 to 526 (ATLFTSFICISCVIIGNLDVI). At 527–529 (TPT) the chain is on the extracellular side. The helical transmembrane segment at 530-552 (ITMFFLLCYAGVNLSCFLLDLLD) threads the bilayer. At 553 to 558 (APSWRP) the chain is on the cytoplasmic side. The chain crosses the membrane as a helical span at residues 559 to 579 (RWKLHHWSLSLIGALLCIVIM). The Extracellular portion of the chain corresponds to 580–585 (FMISWT). Residues 586–606 (FTVVSLALASLIYYYVSLKGK) traverse the membrane as a helical segment. Topologically, residues 607–994 (AGDWGDGFKS…YRRDVVTLFT (388 aa)) are cytoplasmic.

Belongs to the SLC12A transporter family.

The protein resides in the membrane. Functionally, probable cation/chloride cotransporter. In Oryza sativa subsp. japonica (Rice), this protein is Cation-chloride cotransporter 2 (CCC2).